The primary structure comprises 579 residues: Protein O-linked-mannose beta-1,4-N-acetylglucosaminyltransferase 2 (579 aa).

Topologically, residues 1–4 (MGVG) are cytoplasmic. The chain crosses the membrane as a helical; Signal-anchor for type II membrane protein span at residues 5 to 25 (TLLNGLLVSVVAALLWKYSKL). Residues 26–579 (SEHAALLEEE…PFADVLMCRT (554 aa)) are Lumenal-facing. N-linked (GlcNAc...) asparagine glycans are attached at residues N98, N275, and N542. One can recognise a Fibronectin type-III domain in the interval 480 to 579 (HPGRVRDARC…PFADVLMCRT (100 aa)).

It belongs to the glycosyltransferase 61 family.

The protein localises to the endoplasmic reticulum membrane. It catalyses the reaction 3-O-(alpha-D-mannosyl)-L-threonyl-[protein] + UDP-N-acetyl-alpha-D-glucosamine = 3-O-(N-acetyl-beta-D-glucosaminyl-(1-&gt;4)-alpha-D-mannosyl)-L-threonyl-[protein] + UDP + H(+). Its pathway is protein modification; protein glycosylation. Functionally, O-linked mannose beta-1,4-N-acetylglucosaminyltransferase that transfers UDP-N-acetyl-D-glucosamine to the 4-position of the mannose to generate N-acetyl-D-glucosamine-beta-1,4-O-D-mannosylprotein. Involved in the biosynthesis of the phosphorylated O-mannosyl trisaccharide (N-acetylgalactosamine-beta-3-N-acetylglucosamine-beta-4-(phosphate-6-)mannose), a carbohydrate structure present in alpha-dystroglycan (DAG1), which is required for binding laminin G-like domain-containing extracellular proteins with high affinity. The sequence is that of Protein O-linked-mannose beta-1,4-N-acetylglucosaminyltransferase 2 (pomgnt2) from Tetraodon nigroviridis (Spotted green pufferfish).